Here is a 279-residue protein sequence, read N- to C-terminus: Acetyl-coenzyme A carboxylase carboxyl transferase subunit beta (279 aa).

A CoA carboxyltransferase N-terminal domain is found at 23-279 (LWWKCEECGA…IVRLAGMLKV (257 aa)). Residues C27, C30, C46, and C49 each contribute to the Zn(2+) site. A C4-type zinc finger spans residues 27–49 (CEECGAMIHKKQLEDHVYTCSDC).

Belongs to the AccD/PCCB family. In terms of assembly, acetyl-CoA carboxylase is a heterohexamer composed of biotin carboxyl carrier protein (AccB), biotin carboxylase (AccC) and two subunits each of ACCase subunit alpha (AccA) and ACCase subunit beta (AccD). The cofactor is Zn(2+).

The protein resides in the cytoplasm. The catalysed reaction is N(6)-carboxybiotinyl-L-lysyl-[protein] + acetyl-CoA = N(6)-biotinyl-L-lysyl-[protein] + malonyl-CoA. Its pathway is lipid metabolism; malonyl-CoA biosynthesis; malonyl-CoA from acetyl-CoA: step 1/1. Component of the acetyl coenzyme A carboxylase (ACC) complex. Biotin carboxylase (BC) catalyzes the carboxylation of biotin on its carrier protein (BCCP) and then the CO(2) group is transferred by the transcarboxylase to acetyl-CoA to form malonyl-CoA. The polypeptide is Acetyl-coenzyme A carboxylase carboxyl transferase subunit beta (Chlorobium limicola (strain DSM 245 / NBRC 103803 / 6330)).